A 163-amino-acid chain; its full sequence is ATP synthase subunit b', chloroplastic (163 aa).

A helical transmembrane segment spans residues 26-46; that stretch reads ATLPLMAVQILLFMVILNAVF.

The protein belongs to the ATPase B chain family. F-type ATPases have 2 components, F(1) - the catalytic core - and F(0) - the membrane proton channel. F(1) has five subunits: alpha(3), beta(3), gamma(1), delta(1), epsilon(1). F(0) has four main subunits: a(1), b(1), b'(1) and c(10-14). The alpha and beta chains form an alternating ring which encloses part of the gamma chain. F(1) is attached to F(0) by a central stalk formed by the gamma and epsilon chains, while a peripheral stalk is formed by the delta, b and b' chains.

The protein localises to the plastid. Its subcellular location is the chloroplast thylakoid membrane. F(1)F(0) ATP synthase produces ATP from ADP in the presence of a proton or sodium gradient. F-type ATPases consist of two structural domains, F(1) containing the extramembraneous catalytic core and F(0) containing the membrane proton channel, linked together by a central stalk and a peripheral stalk. During catalysis, ATP synthesis in the catalytic domain of F(1) is coupled via a rotary mechanism of the central stalk subunits to proton translocation. Functionally, component of the F(0) channel, it forms part of the peripheral stalk, linking F(1) to F(0). The b'-subunit is a diverged and duplicated form of b found in plants and photosynthetic bacteria. This Guillardia theta (Cryptophyte) protein is ATP synthase subunit b', chloroplastic.